A 680-amino-acid chain; its full sequence is GTPase Obg (680 aa).

The Obg domain maps to 2–160 (DQFIDVVSFE…LNIRLEVKLI (159 aa)). The 176-residue stretch at 161–336 (ADIGLVGMPN…LDGDMLDKVT (176 aa)) folds into the OBG-type G domain. Residues 167–174 (GMPNTGKS), 192–196 (FTTLT), 214–217 (DIPG), 281–284 (NKTD), and 317–319 (PEI) contribute to the GTP site. Residues Ser174 and Thr194 each coordinate Mg(2+). Positions 371–680 (TKRVFGPVVS…NGVLSYAVNI (310 aa)) are radical SAM domain. Positions 383 to 613 (LGNSLGIDVI…IEIDVPSVSD (231 aa)) constitute a Radical SAM core domain. Residues Cys397, Cys401, and Cys404 each contribute to the [4Fe-4S] cluster site.

Belongs to the TRAFAC class OBG-HflX-like GTPase superfamily. OBG GTPase family. In terms of assembly, monomer. Mg(2+) serves as cofactor. The cofactor is [4Fe-4S] cluster.

The protein resides in the cytoplasm. In terms of biological role, an essential GTPase which binds GTP, GDP and possibly (p)ppGpp with moderate affinity, with high nucleotide exchange rates and a fairly low GTP hydrolysis rate. Plays a role in control of the cell cycle, stress response, ribosome biogenesis and in those bacteria that undergo differentiation, in morphogenesis control. This is GTPase Obg from Brachyspira hyodysenteriae (strain ATCC 49526 / WA1).